The following is a 469-amino-acid chain: MSKDMSYSGVMSRRNEIMKNAIGIDYTTFESGSLSFDYEKMMRETGYTLEEMQKIQYSTGVGRTPVLELRNITALARKYAAPGKGARIFIKDEAGNPSGSFKARRAANAVYHAKKLGYKGVIAATSGNYGAAVASQAAMAGLKCIIVQECYDSKGVGQPEIIEKARKCEALGAEVVQLSVGPELFYKFLSLLEETGYFNASLYTPFGIAGVETLGYELAVEFREAYGKDPDVVVCSNAGGGNLTGTARGLIKAGAQSEVVAASVNLQGLHMASDTQFNKKSFTTSHTGFGMPFATWPDRSDVPRSAARPLRYMDRYVTVNQGEVFYITETLASLEGLEKGPAGNTALAAAFSLAQEMDKDQIIVVQETEYTGAGKHIQPQLAFARDNGIDIKFGNPKEEVAGINIILPENPGMIKAVDHEMNKLRKSLIKNALANYPDAKLDDSDIDFLVKETKSDTEFVKATIKEIKG.

Position 102 is an N6-(pyridoxal phosphate)lysine (Lys-102). Residues Asn-128 and 238-242 (AGGGN) contribute to the pyridoxal 5'-phosphate site.

This sequence belongs to the threonine synthase family. In terms of assembly, heterodimer with OrtA. The cofactor is pyridoxal 5'-phosphate.

The enzyme catalyses D-alanine + acetyl-CoA = (2R)-2-amino-4-oxopentanoate + CoA. Completely inhibited by p-chloromercuribenzoate (p-ClHgBzO) and acetyl-CoA, and partially inhibited by N-ethylmaleimide. Functionally, involved in the ornithine fermentation pathway. Catalyzes the thiolytic cleavage of 2-amino-4-ketopentanoate (AKP) with coenzyme A (CoA) to form acetyl-CoA and alanine. It is strictly specific for AKP. The sequence is that of 2-amino-4-ketopentanoate thiolase beta subunit from Acetoanaerobium sticklandii (strain ATCC 12662 / DSM 519 / JCM 1433 / CCUG 9281 / NCIMB 10654 / HF) (Clostridium sticklandii).